The chain runs to 59 residues: Large ribosomal subunit protein bL32C (59 aa).

Belongs to the bacterial ribosomal protein bL32 family.

The protein is Large ribosomal subunit protein bL32C (rpmF3) of Enterococcus faecalis (strain ATCC 700802 / V583).